Consider the following 435-residue polypeptide: uncharacterized protein (435 aa).

11 consecutive transmembrane segments (helical) span residues 9-29 (IIVLFGSFAIILAVGVPITFA), 57-77 (VGLDGFTLLAIPFFVLAGNIM), 110-130 (TLFGAISGSAVASAAAVGGIM), 146-166 (AINVASAPIGLMIPPSNVLIV), 176-196 (VAALFLAGYLPGILTALALMT), 226-246 (LPSLLLIFIIIGGIIGGVFTP), 280-300 (VVTSSIVLLLVGCSMGMSWAM), 321-341 (WVILLIINLILLFVGTFMDIT), 343-363 (AILIFTPIFLPIAQHLGIDPV), 367-387 (IIMVFNLTIGLCTPPVGTILF), and 408-428 (FLALFVVMAMICYFPQLSLLL).

This sequence belongs to the YiaN/YgiK family.

It is found in the cell inner membrane. This is an uncharacterized protein from Salmonella typhimurium (strain LT2 / SGSC1412 / ATCC 700720).